The primary structure comprises 542 residues: CTP synthase (542 aa).

An amidoligase domain region spans residues 1 to 265 (MTRYIFVTGG…DDFVVERFGL (265 aa)). Ser-13 contacts CTP. A UTP-binding site is contributed by Ser-13. ATP-binding positions include 14 to 19 (SLGKGI) and Asp-71. The Mg(2+) site is built by Asp-71 and Glu-139. Residues 146-148 (DIE), 186-191 (KTKPTQ), and Lys-222 contribute to the CTP site. UTP contacts are provided by residues 186–191 (KTKPTQ) and Lys-222. The 252-residue stretch at 290 to 541 (TIAMVGKYME…VKAALAQKNK (252 aa)) folds into the Glutamine amidotransferase type-1 domain. Gly-351 lines the L-glutamine pocket. Cys-378 serves as the catalytic Nucleophile; for glutamine hydrolysis. L-glutamine is bound by residues 379 to 382 (LGMQ), Glu-402, and Arg-469. Active-site residues include His-514 and Glu-516.

The protein belongs to the CTP synthase family. Homotetramer.

The enzyme catalyses UTP + L-glutamine + ATP + H2O = CTP + L-glutamate + ADP + phosphate + 2 H(+). The catalysed reaction is L-glutamine + H2O = L-glutamate + NH4(+). It catalyses the reaction UTP + NH4(+) + ATP = CTP + ADP + phosphate + 2 H(+). Its pathway is pyrimidine metabolism; CTP biosynthesis via de novo pathway; CTP from UDP: step 2/2. Its activity is regulated as follows. Allosterically activated by GTP, when glutamine is the substrate; GTP has no effect on the reaction when ammonia is the substrate. The allosteric effector GTP functions by stabilizing the protein conformation that binds the tetrahedral intermediate(s) formed during glutamine hydrolysis. Inhibited by the product CTP, via allosteric rather than competitive inhibition. In terms of biological role, catalyzes the ATP-dependent amination of UTP to CTP with either L-glutamine or ammonia as the source of nitrogen. Regulates intracellular CTP levels through interactions with the four ribonucleotide triphosphates. This chain is CTP synthase, found in Pseudomonas putida (strain ATCC 700007 / DSM 6899 / JCM 31910 / BCRC 17059 / LMG 24140 / F1).